The primary structure comprises 440 residues: Gap junction gamma-2 protein (440 aa).

Residues 1-21 (MTNMSWSFLTRLLEEIHNHST) are Cytoplasmic-facing. A helical transmembrane segment spans residues 22-42 (FVGKVWLTVLVVFRIVLTAVG). The Extracellular portion of the chain corresponds to 43–78 (GESIYSDEQSKFTCNTRQPGCDNVCYDAFAPLSHVR). A helical membrane pass occupies residues 79–99 (FWVFQIVVISTPSVMYLGYAV). At 100–223 (HRLARASEQE…AQLVVRAAFE (124 aa)) the chain is on the cytoplasmic side. Residues 108 to 199 (QERRRALRRR…TPGPAGQHDG (92 aa)) are disordered. The segment covering 112-124 (RALRRRPGTRRLP) has biased composition (basic residues). The segment covering 136 to 149 (PDTTDLGEAEPILA) has biased composition (low complexity). Positions 150–173 (LEEDEDEEPGAPEGPGEDTEEERA) are enriched in acidic residues. Residues 224–244 (VAFLVGQYLLYGFEVPPFFAC) form a helical membrane-spanning segment. Residues 245 to 264 (SRQPCPHVVDCFVSRPTEKT) are Extracellular-facing. A helical transmembrane segment spans residues 265 to 285 (VFLLVMYVVSCLCLLLNLCEM). Topologically, residues 286–440 (AHLGLGSAQD…SRDGKATVWI (155 aa)) are cytoplasmic. The interval 369-440 (DRDSPPCAGL…SRDGKATVWI (72 aa)) is disordered. Residue S372 is modified to Phosphoserine. Residues 388 to 401 (VGGLASGTGSATSG) show a composition bias toward low complexity.

The protein belongs to the connexin family. Gamma-type subfamily. In terms of assembly, a connexon is composed of a hexamer of connexins. Interacts with TJP1. Mainly expressed by oligodendrocytes in the central nervous system (at protein level).

Its subcellular location is the cell membrane. It is found in the cell junction. The protein resides in the gap junction. Functionally, one gap junction consists of a cluster of closely packed pairs of transmembrane channels, the connexons, through which materials of low MW diffuse from one cell to a neighboring cell. May play a role in myelination in central and peripheral nervous systems. This is Gap junction gamma-2 protein (Gjc2) from Mus musculus (Mouse).